The sequence spans 396 residues: tRNA (guanine-N(7)-)-methyltransferase non-catalytic subunit wdr4 (396 aa).

WD repeat units follow at residues 52–91, 94–133, 137–178, and 180–220; these read HGSD…EKIS, WVSR…EQGR, GHLS…MSFC, and GHTE…EVHS.

It belongs to the WD repeat TRM82 family. In terms of assembly, non-catalytic component of the METTL1-WDR4 complex, composed of mettl1 and wdr4.

It localises to the nucleus. The protein operates within tRNA modification; N(7)-methylguanine-tRNA biosynthesis. Functionally, non-catalytic component of the METTL1-WDR4 methyltransferase complex required for the formation of N(7)-methylguanine in a subset of RNA species, such as tRNAs, mRNAs and microRNAs (miRNAs). In the METTL1-WDR4 methyltransferase complex, wdr4 acts as a scaffold for tRNA-binding. Required for the formation of N(7)-methylguanine at position 46 (m7G46) in a large subset of tRNAs that contain the 5'-RAGGU-3' motif within the variable loop. M7G46 interacts with C13-G22 in the D-loop to stabilize tRNA tertiary structure and protect tRNAs from decay. Also required for the formation of N(7)-methylguanine at internal sites in a subset of mRNAs. Also required for methylation of a specific subset of miRNAs. The protein is tRNA (guanine-N(7)-)-methyltransferase non-catalytic subunit wdr4 (wdr4) of Xenopus laevis (African clawed frog).